A 379-amino-acid polypeptide reads, in one-letter code: Succinyl-diaminopimelate desuccinylase (379 aa).

Histidine 68 serves as a coordination point for Zn(2+). The active site involves aspartate 70. Aspartate 101 contributes to the Zn(2+) binding site. Catalysis depends on glutamate 135, which acts as the Proton acceptor. Zn(2+) contacts are provided by glutamate 136, glutamate 164, and histidine 350.

This sequence belongs to the peptidase M20A family. DapE subfamily. In terms of assembly, homodimer. Requires Zn(2+) as cofactor. Co(2+) serves as cofactor.

The enzyme catalyses N-succinyl-(2S,6S)-2,6-diaminopimelate + H2O = (2S,6S)-2,6-diaminopimelate + succinate. The protein operates within amino-acid biosynthesis; L-lysine biosynthesis via DAP pathway; LL-2,6-diaminopimelate from (S)-tetrahydrodipicolinate (succinylase route): step 3/3. In terms of biological role, catalyzes the hydrolysis of N-succinyl-L,L-diaminopimelic acid (SDAP), forming succinate and LL-2,6-diaminopimelate (DAP), an intermediate involved in the bacterial biosynthesis of lysine and meso-diaminopimelic acid, an essential component of bacterial cell walls. The chain is Succinyl-diaminopimelate desuccinylase from Bordetella bronchiseptica (strain ATCC BAA-588 / NCTC 13252 / RB50) (Alcaligenes bronchisepticus).